Reading from the N-terminus, the 77-residue chain is NAD(P)H-quinone oxidoreductase subunit L (77 aa).

The next 2 helical transmembrane spans lie at 12-32 (LIAY…LLFY) and 47-67 (LGIY…SPFL).

The protein belongs to the complex I NdhL subunit family. As to quaternary structure, NDH-1 can be composed of about 15 different subunits; different subcomplexes with different compositions have been identified which probably have different functions.

It localises to the cellular thylakoid membrane. It carries out the reaction a plastoquinone + NADH + (n+1) H(+)(in) = a plastoquinol + NAD(+) + n H(+)(out). It catalyses the reaction a plastoquinone + NADPH + (n+1) H(+)(in) = a plastoquinol + NADP(+) + n H(+)(out). Its function is as follows. NDH-1 shuttles electrons from an unknown electron donor, via FMN and iron-sulfur (Fe-S) centers, to quinones in the respiratory and/or the photosynthetic chain. The immediate electron acceptor for the enzyme in this species is believed to be plastoquinone. Couples the redox reaction to proton translocation, and thus conserves the redox energy in a proton gradient. Cyanobacterial NDH-1 also plays a role in inorganic carbon-concentration. The polypeptide is NAD(P)H-quinone oxidoreductase subunit L (Prochlorococcus marinus (strain MIT 9312)).